Reading from the N-terminus, the 581-residue chain is Sulfate adenylyltransferase (581 aa).

Residues 1–176 (MANAPHGGVL…VQAIQAPTHF (176 aa)) are N-terminal. Positions 177-401 (DYVPLRFTPA…LRESYPPRPQ (225 aa)) are catalytic. Sulfate is bound at residue Q204. ATP contacts are provided by residues 204 to 207 (QTRN) and 298 to 301 (GRDH). Residues T205, R206, and N207 contribute to the active site. R206 contributes to the sulfate binding site. A302 is a binding site for sulfate. Position 340 (M340) interacts with ATP. Positions 402 to 581 (QGFTILLTGL…IMILESQNLV (180 aa)) are allosteric regulation domain; adenylyl-sulfate kinase-like. 3'-phosphoadenylyl sulfate contacts are provided by residues 441 to 444 (EELR), 486 to 487 (TA), and R526.

This sequence in the N-terminal section; belongs to the sulfate adenylyltransferase family. It in the C-terminal section; belongs to the APS kinase family. In terms of assembly, homohexamer. Dimer of trimers.

Its subcellular location is the cytoplasm. It carries out the reaction sulfate + ATP + H(+) = adenosine 5'-phosphosulfate + diphosphate. It functions in the pathway sulfur metabolism; hydrogen sulfide biosynthesis; sulfite from sulfate: step 1/3. With respect to regulation, allosterically inhibited by 3'-phosphoadenosine 5'-phosphosulfate (PAPS). In terms of biological role, catalyzes the first intracellular reaction of sulfate assimilation, forming adenosine-5'-phosphosulfate (APS) from inorganic sulfate and ATP. Plays an important role in sulfate activation as a component of the biosynthesis pathway of sulfur-containing amino acids. This is Sulfate adenylyltransferase from Cryptococcus neoformans var. neoformans serotype D (strain B-3501A) (Filobasidiella neoformans).